Consider the following 793-residue polypeptide: ABC transporter G family member 1 (793 aa).

A compositionally biased stretch (low complexity) spans 1–20; the sequence is MDSNNNNNNENEAFSGASES. The segment at 1–96 is disordered; the sequence is MDSNNNNNNE…NNNQNNNIIN (96 aa). Over residues 21 to 37 the composition is skewed to basic and acidic residues; sequence SEFRKIVEENENEREFE. Positions 59–68 are enriched in polar residues; it reads ETINPNISLD. Residues 67 to 102 adopt a coiled-coil conformation; sequence LDNNNNNNQNNQNNQNNNNNNNNQNNNIINNLNKKN. Residues 69–96 are compositionally biased toward low complexity; sequence NNNNNNQNNQNNQNNNNNNNNQNNNIIN. The region spanning 123–364 is the ABC transporter domain; the sequence is VQITEKGKKK…FNANGYHCSE (242 aa). ATP is bound at residue 156–163; sequence GPSGAGKT. Residues 382-398 show a composition bias toward acidic residues; that stretch reads DQADSDDDDYNDEEEEI. The tract at residues 382–457 is disordered; sequence DQADSDDDDY…QSTDGRARRR (76 aa). Residues 399–413 are compositionally biased toward gly residues; sequence GGGGGGSGGGAGGIE. Positions 421–437 are enriched in polar residues; the sequence is PTMNGSAVDNIKNNELK. A compositionally biased stretch (low complexity) spans 438–448; that stretch reads QQQQQQQQQQQ. The ABC transmembrane type-2 domain maps to 527-785; it reads MAFKVNLIQA…VLTFLVLKLK (259 aa). Helical transmembrane passes span 533-553, 563-583, 610-630, 647-667, 674-694, 701-721, and 764-784; these read LIQA…LGLG, VVAF…IHVF, FMDA…VYWM, FVLM…LISS, VGTA…GFFI, GWLV…AAVI, and VWIL…VLKL.

This sequence belongs to the ABC transporter superfamily. ABCG family.

It is found in the membrane. The chain is ABC transporter G family member 1 (abcG1) from Dictyostelium discoideum (Social amoeba).